The following is a 443-amino-acid chain: Spermidine hydroxycinnamoyltransferase 1 (443 aa).

Residues histidine 167 and aspartate 390 each act as proton acceptor in the active site.

The protein belongs to the plant acyltransferase family.

In terms of biological role, hydroxycinnamoyl transferase that catalyzes the transfer of an acyl from p-coumaryol-CoA to spermidine, to produce coumaroyl spermidine. Can use feruloyl-CoA as acyl donor. Contributes to the natural variation of spermidine-based phenolamides in rice cultivars. The polypeptide is Spermidine hydroxycinnamoyltransferase 1 (Oryza sativa subsp. japonica (Rice)).